A 522-amino-acid polypeptide reads, in one-letter code: MAAAISYTPPWWVNLLHRLPHLNLQWESLNGDFRPEDPDYQQSLMLLACVALSCLALDLLFLLFYSFWFCCRHRKTEENTNADCCCTVWCVIVATLVCSAGIAVGFYGNGETSDGIHRVTYSIRHVNRTMAGIHDRVSDTTTSLNQTVEPCLQNLEVMFTKQTDYLRIVQRLQSLLYTLVQQTSEIPFWKNHYLLDEFAAQVDLFDWYRWLGYLGLLLFHVFICLLVLFGLIRNSKGTLICVCFLGMMALIISWASMGLELAVAVGSSDFCVNPDTFVSKMVEEKSVLRADILNYYLVCNTGSPNPFQQMLSSGHKALVEMQDDVRDLLRSAVKEYPNSKDYLVCIQGVLNSTEINLQHLTALVDCRGLHLDYVQSLTGFCYDGVEGLIYLVLFSFVTALMFSSIVCSVPHTWQQRRANYEEGDEETTTPGTRQTHDNLYRVHMPSLYSCGSSYGSETSIPAAAHTVSNAPVTEYMSQNANFQNPRCENTPLIGRESPPPSYTSSMRAKYLATNRPETDPVH.

The Extracellular segment spans residues 1 to 43 (MAAAISYTPPWWVNLLHRLPHLNLQWESLNGDFRPEDPDYQQS). A helical transmembrane segment spans residues 44-64 (LMLLACVALSCLALDLLFLLF). Residues 65 to 87 (YSFWFCCRHRKTEENTNADCCCT) are Cytoplasmic-facing. Residues 88-108 (VWCVIVATLVCSAGIAVGFYG) traverse the membrane as a helical segment. Residues 109–211 (NGETSDGIHR…VDLFDWYRWL (103 aa)) are Extracellular-facing. Ca(2+)-binding residues include E111 and D114. N127 and N145 each carry an N-linked (GlcNAc...) asparagine glycan. Residues 212 to 232 (GYLGLLLFHVFICLLVLFGLI) form a helical membrane-spanning segment. At 233–238 (RNSKGT) the chain is on the cytoplasmic side. A helical transmembrane segment spans residues 239-259 (LICVCFLGMMALIISWASMGL). At 260-386 (ELAVAVGSSD…LTGFCYDGVE (127 aa)) the chain is on the extracellular side. Disulfide bonds link C271-C381 and C299-C366. An N-linked (GlcNAc...) asparagine glycan is attached at N351. A helical transmembrane segment spans residues 387 to 407 (GLIYLVLFSFVTALMFSSIVC). Topologically, residues 408 to 522 (SVPHTWQQRR…TNRPETDPVH (115 aa)) are cytoplasmic. Residues 483–522 (QNPRCENTPLIGRESPPPSYTSSMRAKYLATNRPETDPVH) form a disordered region.

This sequence belongs to the tweety family. As to quaternary structure, homotetramer; disulfide-linked. Forms cis-homodimers in the presence of Ca(2+).

The protein resides in the cell membrane. The catalysed reaction is chloride(in) = chloride(out). It catalyses the reaction L-glutamate(out) = L-glutamate(in). Its function is as follows. May act as a calcium-independent, swelling-dependent volume-regulated anion channel (VRAC-swell) which plays a pivotal role in the process of regulatory volume decrease (RVD) in the brain through the efflux of anions like chloride and organic osmolytes like glutamate. Probable large-conductance Ca(2+)-activated chloride channel. This is Protein tweety homolog 3 (ttyh3) from Xenopus laevis (African clawed frog).